Here is a 439-residue protein sequence, read N- to C-terminus: Acyl-coenzyme A thioesterase 10, mitochondrial (439 aa).

Residues 1–21 (MKRAAMRLWTLNKGLLTHGRG) constitute a mitochondrion transit peptide. 2 HotDog ACOT-type domains span residues 85–209 (SYIE…QDSE) and 289–401 (EDTK…EKEV).

This sequence belongs to the acyl coenzyme A hydrolase family.

It is found in the mitochondrion. Functionally, catalyzes the hydrolysis of acyl-CoAs into free fatty acids and coenzyme A (CoASH), regulating their respective intracellular levels. Active on long chain acyl-CoAs. This chain is Acyl-coenzyme A thioesterase 10, mitochondrial, found in Mus musculus (Mouse).